The sequence spans 107 residues: uncharacterized protein (107 aa).

2 disordered regions span residues 51 to 75 and 88 to 107; these read VQRS…TQSA and NPTP…APEP. The segment covering 63–75 has biased composition (polar residues); sequence NGNQGSAIPTQSA.

This is an uncharacterized protein from Fowl adenovirus A serotype 1 (strain CELO / Phelps) (FAdV-1).